A 138-amino-acid polypeptide reads, in one-letter code: Translation initiation factor 2 subunit beta (138 aa).

Belongs to the eIF-2-beta/eIF-5 family. Heterotrimer composed of an alpha, a beta and a gamma chain.

Functionally, eIF-2 functions in the early steps of protein synthesis by forming a ternary complex with GTP and initiator tRNA. The sequence is that of Translation initiation factor 2 subunit beta from Methanococcus maripaludis (strain C5 / ATCC BAA-1333).